The sequence spans 438 residues: GTPase Der (438 aa).

2 EngA-type G domains span residues 4 to 168 (PLVT…KSEG) and 177 to 352 (IKIA…DNYS). GTP-binding positions include 10-17 (GRPNVGKS), 57-61 (DTGGI), 120-123 (NKID), 183-190 (GKPNVGKS), 230-234 (DTAGL), and 295-298 (NKWD). One can recognise a KH-like domain in the interval 353–437 (KRIATGVLND…GIKMIFKERK (85 aa)).

The protein belongs to the TRAFAC class TrmE-Era-EngA-EngB-Septin-like GTPase superfamily. EngA (Der) GTPase family. As to quaternary structure, associates with the 50S ribosomal subunit.

In terms of biological role, GTPase that plays an essential role in the late steps of ribosome biogenesis. This is GTPase Der from Clostridium acetobutylicum (strain ATCC 824 / DSM 792 / JCM 1419 / IAM 19013 / LMG 5710 / NBRC 13948 / NRRL B-527 / VKM B-1787 / 2291 / W).